The primary structure comprises 204 residues: Somatotropin (204 aa).

The N-terminal stretch at 1 to 17 (MDRVILLLSVVSLGVSS) is a signal peptide. Q18 is subject to Pyrrolidone carboxylic acid. H36 is a Zn(2+) binding site. C69 and C177 are joined by a disulfide. Position 186 (E186) interacts with Zn(2+). A disulfide bond links C194 and C202.

It belongs to the somatotropin/prolactin family.

The protein resides in the secreted. Its function is as follows. Growth hormone plays an important role in growth control and is involved in the regulation of several anabolic processes. Implicated as an osmoregulatory substance important for seawater adaptation. This chain is Somatotropin (gh), found in Sebastes schlegelii (Korean rockfish).